A 757-amino-acid polypeptide reads, in one-letter code: Vitamin K-dependent gamma-carboxylase (757 aa).

Position 2 is an N-acetylalanine (A2). The Cytoplasmic segment spans residues 2–60 (AVHRGSALVAPASDKVQKNKSAQTSGLKQGSRMEKILGFEWTDLSSWQSVVTLLNKPTD). Residues 61 to 81 (PANLAVFRFLFAFLMLLDIPQ) traverse the membrane as a helical segment. Residues 82-113 (ERGLSSLDRKYLDGLDVCRFPLLDALRPLPLD) lie on the Lumenal side of the membrane. A disulfide bond links C99 and C450. Residues 114 to 134 (WMYLVYTIMFLGALGMMLGLC) traverse the membrane as a helical segment. Topologically, residues 135 to 136 (YR) are cytoplasmic. The helical transmembrane segment at 137 to 157 (LSCVLFLLPYWYVFLLDKTSW) threads the bilayer. The Lumenal segment spans residues 158–292 (NNHSYLYGLL…VSYFHCMNSQ (135 aa)). Residues 293-313 (LFSIGMFPYVMLASSPLFCSA) form a helical membrane-spanning segment. At 314–361 (EWPRKLVARCPKRLQELLPTKAAPRPSASCVYKRSRGKAGPKPGLRHQ) the chain is on the cytoplasmic side. A helical membrane pass occupies residues 362–382 (LGAIFTLLYLLEQLFLPYSHF). The Lumenal segment spans residues 383-757 (LTQGYNNWTN…PDSEHVHSEF (375 aa)). The disordered stretch occupies residues 729–757 (EPVDESSASNTDSSNHPSEPDSEHVHSEF). Positions 734–745 (SSASNTDSSNHP) are enriched in polar residues. Over residues 746 to 757 (SEPDSEHVHSEF) the composition is skewed to basic and acidic residues.

This sequence belongs to the vitamin K-dependent gamma-carboxylase family. As to quaternary structure, monomer. May interact with CALU.

The protein localises to the endoplasmic reticulum membrane. It catalyses the reaction 4-carboxy-L-glutamyl-[protein] + 2,3-epoxyphylloquinone + H2O + H(+) = phylloquinol + L-glutamyl-[protein] + CO2 + O2. Functionally, mediates the vitamin K-dependent carboxylation of glutamate residues to calcium-binding gamma-carboxyglutamate (Gla) residues with the concomitant conversion of the reduced hydroquinone form of vitamin K to vitamin K epoxide. Catalyzes gamma-carboxylation of various proteins, such as blood coagulation factors (F2, F7, F9 and F10), osteocalcin (bglap and bglap2) or matrix Gla protein (MGP). This Mus musculus (Mouse) protein is Vitamin K-dependent gamma-carboxylase (Ggcx).